The sequence spans 246 residues: D-erythrulose reductase (246 aa).

Residue 13-41 (LVTGAGKGIGRAVAVALCKAGARVTALSR) participates in NADP(+) binding. Ser138 is a binding site for substrate. Catalysis depends on Tyr151, which acts as the Proton acceptor. Position 155 (Lys155) interacts with NADP(+).

This sequence belongs to the short-chain dehydrogenases/reductases (SDR) family. Homotetramer. In terms of processing, the N-terminus is blocked. Highly expressed in kidney, and also found in high amounts in liver and testis. Low expression seen in all other tissues tested.

The protein localises to the cytoplasm. It carries out the reaction D-threitol + NADP(+) = D-erythrulose + NADPH + H(+). It catalyses the reaction xylitol + NADP(+) = L-xylulose + NADPH + H(+). In terms of biological role, catalyzes the reduction of D-erythrulose to D-threitol with the concomitant oxidation of NAD(P)H to NAD(P)(+). NADH is less effective than NADPH. May also catalyze the reduction of L-xylulose. The sequence is that of D-erythrulose reductase (DER) from Gallus gallus (Chicken).